The following is a 94-amino-acid chain: Large ribosomal subunit protein uL29 (94 aa).

Positions 66 to 94 (NPGERKSRVLSRAKRKKKNLARLSAKVKG) are disordered. Residues 73–94 (RVLSRAKRKKKNLARLSAKVKG) are compositionally biased toward basic residues.

It belongs to the universal ribosomal protein uL29 family.

The polypeptide is Large ribosomal subunit protein uL29 (Leptospira borgpetersenii serovar Hardjo-bovis (strain JB197)).